Consider the following 182-residue polypeptide: Succinate dehydrogenase [ubiquinone] cytochrome b small subunit, mitochondrial (182 aa).

At 1 to 71 the chain is on the mitochondrial matrix side; it reads MSLSLLLRGA…SAPRMASAGS (71 aa). Residues 72-96 form a helical membrane-spanning segment; it reads SHTLLWTVERIVSAGLLAVIPAAFI. The Mitochondrial intermembrane portion of the chain corresponds to 97–101; that stretch reads APSQV. Residues 102-122 traverse the membrane as a helical segment; sequence LDALMAISVVIHTHWGVEAMV. His-113 contributes to the heme binding site. Residues 123-135 are Mitochondrial matrix-facing; that stretch reads VDYMRPSVVGNVL. Tyr-125 contributes to the a ubiquinone binding site. A helical transmembrane segment spans residues 136-157; the sequence is PKVAHIALIIISVATLGGLFYF. Over 158 to 182 the chain is Mitochondrial intermembrane; that stretch reads IQNDVGLANGIKRFWAIKGKDAEKA.

This sequence belongs to the CybS family. As to quaternary structure, forms part of complex II containing four subunits: a flavoprotein (FP), an iron-sulfur protein (IP) and a cytochrome b composed of a large and a small subunit.

It localises to the mitochondrion inner membrane. Its pathway is carbohydrate metabolism; tricarboxylic acid cycle. Its function is as follows. Membrane-anchoring subunit of succinate dehydrogenase (SDH) that is involved in complex II of the mitochondrial electron transport chain and is responsible for transferring electrons from succinate to ubiquinone (coenzyme Q). The sequence is that of Succinate dehydrogenase [ubiquinone] cytochrome b small subunit, mitochondrial from Drosophila melanogaster (Fruit fly).